The following is a 104-amino-acid chain: Naphthalene 1,2-dioxygenase system, ferredoxin component (104 aa).

In terms of domain architecture, Rieske spans 6–101 (IEAVALSDIL…VKIENLRVMI (96 aa)). [2Fe-2S] cluster-binding residues include C45, H47, C64, and H67.

It belongs to the bacterial ring-hydroxylating dioxygenase ferredoxin component family. In terms of assembly, the naphthalene dioxygenase (NDO) multicomponent enzyme system is composed of an electron transfer component and a dioxygenase component (iron sulfur protein (ISP)). The electron transfer component is composed of a ferredoxin reductase (NdoR) and a ferredoxin (NdoA), and the dioxygenase component is formed of a heterohexamer (trimer of heterodimers) of three large alpha subunits (NdoB) and three small beta subunits (NdoC). Requires [2Fe-2S] cluster as cofactor.

Its pathway is aromatic compound metabolism; naphthalene degradation. In terms of biological role, component of the naphthalene dioxygenase (NDO) multicomponent enzyme system which catalyzes the incorporation of both atoms of molecular oxygen into naphthalene to form cis-(1R,2S)-dihydroxy-1,2-dihydronaphthalene. Functions as an intermediate electron transfer protein via a specific interaction with iron sulfur protein components (ISP) (NdoB and NdoC). Also able to catalyze the cis-dihydroxylation of biphenyl and phenanthrene. The chain is Naphthalene 1,2-dioxygenase system, ferredoxin component from Pseudomonas putida (Arthrobacter siderocapsulatus).